Here is a 576-residue protein sequence, read N- to C-terminus: Proline--tRNA ligase (576 aa).

This sequence belongs to the class-II aminoacyl-tRNA synthetase family. ProS type 1 subfamily. In terms of assembly, homodimer.

It localises to the cytoplasm. The enzyme catalyses tRNA(Pro) + L-proline + ATP = L-prolyl-tRNA(Pro) + AMP + diphosphate. Its function is as follows. Catalyzes the attachment of proline to tRNA(Pro) in a two-step reaction: proline is first activated by ATP to form Pro-AMP and then transferred to the acceptor end of tRNA(Pro). As ProRS can inadvertently accommodate and process non-cognate amino acids such as alanine and cysteine, to avoid such errors it has two additional distinct editing activities against alanine. One activity is designated as 'pretransfer' editing and involves the tRNA(Pro)-independent hydrolysis of activated Ala-AMP. The other activity is designated 'posttransfer' editing and involves deacylation of mischarged Ala-tRNA(Pro). The misacylated Cys-tRNA(Pro) is not edited by ProRS. The polypeptide is Proline--tRNA ligase (Helicobacter pylori (strain J99 / ATCC 700824) (Campylobacter pylori J99)).